Here is a 355-residue protein sequence, read N- to C-terminus: uncharacterized protein (355 aa).

3 disordered regions span residues 1-121 (MPID…MELR), 226-253 (RLMNSEEREAQDLKDAEASRRGKKKSSM), and 336-355 (NLHRLGGLHSDSPLSKRKRT). The segment covering 24 to 37 (LESESSSESDYEEV) has biased composition (acidic residues). A compositionally biased stretch (polar residues) spans 65 to 87 (ETKTSSNFQNINPVQTIDNSASE). Residues 91 to 105 (DASSAEGGSNSAASS) show a composition bias toward low complexity. The span at 106-117 (SEEEDSSDSEYE) shows a compositional bias: acidic residues. The span at 226–245 (RLMNSEEREAQDLKDAEASR) shows a compositional bias: basic and acidic residues.

This is an uncharacterized protein from Schizosaccharomyces pombe (strain 972 / ATCC 24843) (Fission yeast).